We begin with the raw amino-acid sequence, 188 residues long: MKKIGVLAIQGAVDEHIQMIESAGALAFKVKHSNDLAGLDGLVLPGGESTTMRKIMKRYDLMEPVKAFASKGKAIFGTCAGLVLLSKEIEGGEESLGLIEATAIRNGFGRQKESFEAELNVEAFGEPAFEAIFIRAPYLIEPSNEVAVLATVENRIVAAKQANILVTAFHPELTNDNRWMNYFLEKMV.

47–49 (GES) provides a ligand contact to L-glutamine. Cys79 acts as the Nucleophile in catalysis. Residues Arg105 and 134–135 (IR) each bind L-glutamine. Active-site charge relay system residues include His170 and Glu172.

Belongs to the glutaminase PdxT/SNO family. In the presence of PdxS, forms a dodecamer of heterodimers. Only shows activity in the heterodimer.

The enzyme catalyses aldehydo-D-ribose 5-phosphate + D-glyceraldehyde 3-phosphate + L-glutamine = pyridoxal 5'-phosphate + L-glutamate + phosphate + 3 H2O + H(+). It catalyses the reaction L-glutamine + H2O = L-glutamate + NH4(+). It functions in the pathway cofactor biosynthesis; pyridoxal 5'-phosphate biosynthesis. Catalyzes the hydrolysis of glutamine to glutamate and ammonia as part of the biosynthesis of pyridoxal 5'-phosphate. The resulting ammonia molecule is channeled to the active site of PdxS. The sequence is that of Pyridoxal 5'-phosphate synthase subunit PdxT from Listeria monocytogenes serovar 1/2a (strain ATCC BAA-679 / EGD-e).